Consider the following 329-residue polypeptide: MTKDLRPIIWDDDKKELILIDQRKLPNKLEYFICKTYEDVAYAIKDMVVRGAPAIGVSAAYGLALAEINGDDIYKAYEVLKNTRPTAVNLFWALDRCLTAYKEGKSILDEAKKIHEEDIETCKKIGMIGEKLIEDGDTILTHCNAGALATSAYGTALSVIRFAFYNGKKIRVIADETRPRLQGAKLTAFELNYEGIPVKVITDNTAGFLMQKGEIDKIIVGADRILADGTVYNKIGTYSLAVLAKYHRIPFYVAAPLSTFDLRSSEEDVIIEERDEKEVAYIDGVRIVPEGVGCYNYAFDKTPPDLITAIITEKGIVKPNRDEILKLFR.

Residues 50 to 52 (RGA), Arg84, and Gln182 each bind substrate. Asp223 (proton donor) is an active-site residue. 233–234 (NK) contacts substrate.

This sequence belongs to the eIF-2B alpha/beta/delta subunits family. MtnA subfamily.

It catalyses the reaction 5-(methylsulfanyl)-alpha-D-ribose 1-phosphate = 5-(methylsulfanyl)-D-ribulose 1-phosphate. Functionally, catalyzes the interconversion of methylthioribose-1-phosphate (MTR-1-P) into methylthioribulose-1-phosphate (MTRu-1-P). The polypeptide is Putative methylthioribose-1-phosphate isomerase (Methanocaldococcus jannaschii (strain ATCC 43067 / DSM 2661 / JAL-1 / JCM 10045 / NBRC 100440) (Methanococcus jannaschii)).